The sequence spans 195 residues: Small ribosomal subunit protein uS4 (195 aa).

The S4 RNA-binding domain maps to 92 to 152 (SRLDNIVYRL…EKHKHKANKN (61 aa)).

This sequence belongs to the universal ribosomal protein uS4 family. Part of the 30S ribosomal subunit. Contacts protein S5. The interaction surface between S4 and S5 is involved in control of translational fidelity.

One of the primary rRNA binding proteins, it binds directly to 16S rRNA where it nucleates assembly of the body of the 30S subunit. Functionally, with S5 and S12 plays an important role in translational accuracy. The sequence is that of Small ribosomal subunit protein uS4 from Karelsulcia muelleri (strain GWSS) (Sulcia muelleri).